The primary structure comprises 188 residues: Abscisic acid receptor PYL8 (188 aa).

An START-like region spans residues H25–E176. A disulfide bridge links C32 with C157. K61 serves as a coordination point for abscisate. T77 carries the post-translational modification Phosphothreonine; by CARK1. The short motif at S85–A89 is the Gate loop element. Abscisate contacts are provided by residues A89–E94, R116–S122, and E141. The short motif at H115–L117 is the Latch loop element.

The protein belongs to the PYR/PYL/RCAR abscisic acid intracellular receptor family. Monomer. Homodimer. Binds ABA on one subunit only. interacts with ABI1 and HAB1, and possibly with other PP2Cs. Binds to CARs protein in an ABA-independent manner, both at the plasma membrane and in the nucleus. Interacts directly with CAR1 and CAR4. Interacts with MYB44, MYB73 and MYB77 in an ABA-independent manner. Interacts with DDA1. Interacts with CARK1 in the cytosol. Binds to ABI1 when phosphorylated by CARK1. Interacts with AIP1 in the nucleus. Post-translationally, phosphorylated by CARK1 especially in response to abscisic acid (ABA); this phosphorylation promotes its stability and inhibitory ability to ABI1. In terms of processing, ubiquitinated in DDA1- and CDD complex-dependent manner. Ubiquitination leads to its subsequent proteasomal degradation.

It is found in the cytoplasm. It localises to the cytosol. The protein localises to the nucleus. The protein resides in the cell membrane. Functionally, receptor for abscisic acid (ABA) required for ABA-mediated responses such as stomatal closure and germination inhibition. Inhibits the activity of group-A protein phosphatases type 2C (PP2Cs) in an ABA-independent manner but more efficiently when activated by ABA. Confers enhanced sensitivity to ABA. Can be activated by both (-)-ABA and (+)-ABA. Mediates crosstalk between ABA and auxin signaling to regulate lateral root growth. Required for lateral root growth suppression by ABA. In response to auxin, promotes lateral root growth by enhancing MYB77-dependent transcription of the auxin-responsive gene IAA19. Enhances the abilities of MYB44 and MYB73 to activate IAA19 gene. This is Abscisic acid receptor PYL8 from Arabidopsis thaliana (Mouse-ear cress).